We begin with the raw amino-acid sequence, 267 residues long: Apolipoprotein A-I (267 aa).

A signal peptide spans 1-18 (MKAAVLTLAVLFLTGSQA). 2 consecutive repeat copies span residues 68–89 (LKLLDNWDSVTSTFSKLREQLG) and 90–111 (PVTQEFWDNLEKETEGLRQEMS). The 10 X approximate tandem repeats stretch occupies residues 68-267 (LKLLDNWDSV…EEYTKKLNTQ (200 aa)). Position 110 is a methionine sulfoxide (Met-110). One copy of the 3; half-length repeat lies at 112-122 (KDLEEVKAKVQ). 5 tandem repeats follow at residues 123-144 (PYLDDFQKKWQEEMELYRQKVE), 145-166 (PLRAELQEGARQKLHELQEKLS), 167-188 (PLGEEMRDRARAHVDALRTHLA), 189-210 (PYSDELRQRLAARLEALKENGG), and 211-232 (ARLAEYHAKATEHLSTLSEKAK). The residue at position 136 (Met-136) is a Methionine sulfoxide. The 9; half-length repeat unit spans residues 233–243 (PALEDLRQGLL). Copy 10 of the repeat occupies 244 to 267 (PVLESFKVSFLSALEEYTKKLNTQ).

The protein belongs to the apolipoprotein A1/A4/E family. In terms of assembly, homodimer. Interacts with APOA1BP and CLU. Component of a sperm activating protein complex (SPAP), consisting of APOA1, an immunoglobulin heavy chain, an immunoglobulin light chain and albumin. Interacts with NDRG1. Interacts with SCGB3A2. Interacts with NAXE and YJEFN3. In terms of processing, glycosylated. Palmitoylated. Post-translationally, phosphorylation sites are present in the extracellular medium. In terms of tissue distribution, major protein of plasma HDL, also found in chylomicrons.

The protein resides in the secreted. In terms of biological role, participates in the reverse transport of cholesterol from tissues to the liver for excretion by promoting cholesterol efflux from tissues and by acting as a cofactor for the lecithin cholesterol acyltransferase (LCAT). As part of the SPAP complex, activates spermatozoa motility. The sequence is that of Apolipoprotein A-I (APOA1) from Pan paniscus (Pygmy chimpanzee).